Reading from the N-terminus, the 339-residue chain is Ketol-acid reductoisomerase (NADP(+)) (339 aa).

The KARI N-terminal Rossmann domain maps to 1–182 (MRVYYDRDAD…GGGRSGIIET (182 aa)). Residues 24–27 (YGSQ), arginine 48, serine 51, serine 53, and 83–86 (DELQ) each bind NADP(+). The active site involves histidine 108. Glycine 134 contributes to the NADP(+) binding site. Residues 183 to 328 (TFREECETDL…GRLRAMMPWI (146 aa)) form the KARI C-terminal knotted domain. Residues aspartate 191, glutamate 195, glutamate 227, and glutamate 231 each coordinate Mg(2+). A substrate-binding site is contributed by serine 252.

This sequence belongs to the ketol-acid reductoisomerase family. Requires Mg(2+) as cofactor.

The catalysed reaction is (2R)-2,3-dihydroxy-3-methylbutanoate + NADP(+) = (2S)-2-acetolactate + NADPH + H(+). The enzyme catalyses (2R,3R)-2,3-dihydroxy-3-methylpentanoate + NADP(+) = (S)-2-ethyl-2-hydroxy-3-oxobutanoate + NADPH + H(+). The protein operates within amino-acid biosynthesis; L-isoleucine biosynthesis; L-isoleucine from 2-oxobutanoate: step 2/4. It functions in the pathway amino-acid biosynthesis; L-valine biosynthesis; L-valine from pyruvate: step 2/4. Its function is as follows. Involved in the biosynthesis of branched-chain amino acids (BCAA). Catalyzes an alkyl-migration followed by a ketol-acid reduction of (S)-2-acetolactate (S2AL) to yield (R)-2,3-dihydroxy-isovalerate. In the isomerase reaction, S2AL is rearranged via a Mg-dependent methyl migration to produce 3-hydroxy-3-methyl-2-ketobutyrate (HMKB). In the reductase reaction, this 2-ketoacid undergoes a metal-dependent reduction by NADPH to yield (R)-2,3-dihydroxy-isovalerate. The polypeptide is Ketol-acid reductoisomerase (NADP(+)) (Rhodospirillum rubrum (strain ATCC 11170 / ATH 1.1.1 / DSM 467 / LMG 4362 / NCIMB 8255 / S1)).